Consider the following 528-residue polypeptide: MDSAFVLPHPASMGASCILGLLLLTILRALLIPKKALPLAINHHRWDIFNRRAIQDFTANPQDLIKAGLKKVIDPQIAPRFAKGTFLVLPERYSEEVKNDERFSAYEALSRSSPQIILLELPGFESVFEGLMHNDVVLPGVAAMNRQLASLTSPMSEEVSHYLQTNWTDDPDWHTQSVSASMSGLIGQAAARIIVGPELCRNKEYHAITLSYTMSRGRALAAIHAWPRALHPLIHWFLPSCRNVRTQIRRAEKLITPILERTRRHRARGDPPQAFSTLAWSDEYARAQGRSYNATLAQMRFTSSSIHNTSDLLGKVMLRICQRPDLIEPLRREIVAAFDGGSGAQHHSLGKLKLMESVMKETQRLEPAAERVSYPPPLTPERLTGYSIVNMFRVAKETVTLSDGTTIPKGTIFGFSYQNRFDPSMYPDPETFDPYRFMRMRQDPVQASLASFTKARSTHLSFGLGRHACPGRFMANDMIKLALSHILLKYDFKLVGEELPKLEMHGFVYAREPTAQILVRRRQEEVVL.

Residues 5–27 traverse the membrane as a helical segment; it reads FVLPHPASMGASCILGLLLLTIL. Cys-469 lines the heme pocket.

This sequence belongs to the cytochrome P450 family. The cofactor is heme.

The protein resides in the membrane. It participates in alkaloid biosynthesis. Its function is as follows. Nonribosomal peptide synthetase; part of the gene cluster that mediates the biosynthesis of the ergot alkaloids lentopeptins A and B. Within the pathway, lenC catalyzes the post-NRPS oxidative modification steps using as substrate the N-acyldiketopiperazine intermediate produced by the NRPS lenA. Lentopeptin A forms via a stereospecific hydroxylation, followed by a spontaneous bicyclic lactam core formation, while lentopeptin B is produced through an initial dehydrogenation, followed by a bicyclic lactam core formation and stereospecific hydration. The phenylalanine ammonia-lyase lenB provides the cinnamic acid starter unit to the NRPS lenA for the synthesis of the N-acyldiketopiperazine intermediate which in turn is converted into lentopeptins A and B by lenC. This chain is Cytochrome P450 monooxygenase lenC, found in Aspergillus lentulus.